The following is a 361-amino-acid chain: Phosphoribosylformylglycinamidine cyclo-ligase (361 aa).

The protein belongs to the AIR synthase family.

The protein resides in the cytoplasm. The enzyme catalyses 2-formamido-N(1)-(5-O-phospho-beta-D-ribosyl)acetamidine + ATP = 5-amino-1-(5-phospho-beta-D-ribosyl)imidazole + ADP + phosphate + H(+). Its pathway is purine metabolism; IMP biosynthesis via de novo pathway; 5-amino-1-(5-phospho-D-ribosyl)imidazole from N(2)-formyl-N(1)-(5-phospho-D-ribosyl)glycinamide: step 2/2. The sequence is that of Phosphoribosylformylglycinamidine cyclo-ligase from Bartonella henselae (strain ATCC 49882 / DSM 28221 / CCUG 30454 / Houston 1) (Rochalimaea henselae).